Consider the following 383-residue polypeptide: Putative [LysW]-aminoadipate semialdehyde/glutamate semialdehyde transaminase (383 aa).

Pyridoxal 5'-phosphate is bound by residues 97–98 (GT) and Phe-124. Arg-127 serves as a coordination point for substrate. 209–212 (DEVQ) serves as a coordination point for pyridoxal 5'-phosphate. Lys-238 carries the N6-(pyridoxal phosphate)lysine modification. Ser-266 serves as a coordination point for substrate. Position 267 (Thr-267) interacts with pyridoxal 5'-phosphate.

Belongs to the class-III pyridoxal-phosphate-dependent aminotransferase family. LysJ subfamily. As to quaternary structure, homodimer. Pyridoxal 5'-phosphate is required as a cofactor.

The protein resides in the cytoplasm. The enzyme catalyses [amino-group carrier protein]-C-terminal-gamma-(L-lysyl)-L-glutamate + 2-oxoglutarate = [amino-group carrier protein]-C-terminal-N-(1-carboxy-5-oxopentan-1-yl)-L-glutamine + L-glutamate. The catalysed reaction is [amino-group carrier protein]-C-terminal-gamma-(L-ornithyl)-L-glutamate + 2-oxoglutarate = [amino-group carrier protein]-C-terminal-gamma-(L-glutamyl-5-semialdehyde)-L-glutamate + L-glutamate. It functions in the pathway amino-acid biosynthesis; L-lysine biosynthesis via AAA pathway; L-lysine from L-alpha-aminoadipate (Thermus route): step 4/5. It participates in amino-acid biosynthesis; L-arginine biosynthesis. Its function is as follows. Involved in both the arginine and lysine biosynthetic pathways. The polypeptide is Putative [LysW]-aminoadipate semialdehyde/glutamate semialdehyde transaminase (Pyrobaculum aerophilum (strain ATCC 51768 / DSM 7523 / JCM 9630 / CIP 104966 / NBRC 100827 / IM2)).